A 469-amino-acid chain; its full sequence is MTTANEVLKQIKENDVKFVDLRFTDPKGKLQHVTMDVVCVDEDMFADGVMFDGSSIGGWKAINESDMVLMPDPETAHMDPFFAQSTMVIFCDILDPVSGEAYNRDPRGTAKKAEAYLKASGIGDTVFVGPEAEFFVFDDVKYKADPYNTGFKLDSSELPSNDDTDYETGNLGHRPRVKGGYFPVPPVDSSQDMRSEMLTVLSEMGVTVEKHHHEVAAAQHELGVKFDALVRNADKMQIYKYVVHQVANAYGKTATFMPKPIFGDNGSGMHVHLSIWKDGKPTFAGDEYAGLSESCLYFIGGIIKHAKALNAFTNPSTNSYKRLVPGYEAPVLLAYSARNRSASCRIPFGTNPKAKRVEVRFPDPTANPYLAFAAMLMAGLDGIKNKLHPGKAMDKDLYDLPPKELKKIPTVCGSLREALESLDKDRKFLTAGGVFDDDQIDSFIELKMQEVMRFEMTPHPVEFDMYYSV.

A GS beta-grasp domain is found at 14-99 (NDVKFVDLRF…FCDILDPVSG (86 aa)). The region spanning 106–469 (PRGTAKKAEA…PVEFDMYYSV (364 aa)) is the GS catalytic domain. Mg(2+) is bound by residues glutamate 131 and glutamate 133. Residue glutamate 209 participates in ATP binding. Mg(2+) contacts are provided by glutamate 214 and glutamate 221. L-glutamate is bound by residues 265-266 (NG) and glycine 266. Mg(2+) is bound at residue histidine 270. Residues 272–274 (HLS) and serine 274 each bind ATP. 3 residues coordinate L-glutamate: arginine 322, glutamate 328, and arginine 340. ATP-binding residues include arginine 340, arginine 345, and lysine 353. Glutamate 358 contacts Mg(2+). Residue arginine 360 participates in L-glutamate binding. Residue tyrosine 398 is modified to O-AMP-tyrosine.

Belongs to the glutamine synthetase family. Oligomer of 12 subunits arranged in the form of two hexameric ring. Requires Mg(2+) as cofactor.

The protein localises to the cytoplasm. It catalyses the reaction L-glutamate + NH4(+) + ATP = L-glutamine + ADP + phosphate + H(+). Its activity is regulated as follows. The activity of this enzyme could be controlled by adenylation under conditions of abundant glutamine. In terms of biological role, catalyzes the ATP-dependent biosynthesis of glutamine from glutamate and ammonia. The protein is Glutamine synthetase of Rhizobium meliloti (strain 1021) (Ensifer meliloti).